The following is a 107-amino-acid chain: Large ribosomal subunit protein uL24 (107 aa).

The protein belongs to the universal ribosomal protein uL24 family. In terms of assembly, part of the 50S ribosomal subunit.

Functionally, one of two assembly initiator proteins, it binds directly to the 5'-end of the 23S rRNA, where it nucleates assembly of the 50S subunit. In terms of biological role, one of the proteins that surrounds the polypeptide exit tunnel on the outside of the subunit. The chain is Large ribosomal subunit protein uL24 from Caldanaerobacter subterraneus subsp. tengcongensis (strain DSM 15242 / JCM 11007 / NBRC 100824 / MB4) (Thermoanaerobacter tengcongensis).